A 375-amino-acid polypeptide reads, in one-letter code: Peptide chain release factor 1 (375 aa).

N5-methylglutamine is present on Q237. Basic and acidic residues predominate over residues 289-299 (AAREAQERQER). Residues 289–326 (AAREAQERQERASQVGSGDRSEKIRTYNYPQNRVTDHR) are disordered.

The protein belongs to the prokaryotic/mitochondrial release factor family. Post-translationally, methylated by PrmC. Methylation increases the termination efficiency of RF1.

It is found in the cytoplasm. Its function is as follows. Peptide chain release factor 1 directs the termination of translation in response to the peptide chain termination codons UAG and UAA. The chain is Peptide chain release factor 1 (prfA) from Deinococcus radiodurans (strain ATCC 13939 / DSM 20539 / JCM 16871 / CCUG 27074 / LMG 4051 / NBRC 15346 / NCIMB 9279 / VKM B-1422 / R1).